Reading from the N-terminus, the 342-residue chain is tRNA N6-adenosine threonylcarbamoyltransferase (342 aa).

Residues histidine 111 and histidine 115 each coordinate Fe cation. Substrate is bound by residues 134–138 (LVSGG), aspartate 167, glycine 180, and asparagine 277. Aspartate 305 contacts Fe cation.

This sequence belongs to the KAE1 / TsaD family. The cofactor is Fe(2+).

It localises to the cytoplasm. The catalysed reaction is L-threonylcarbamoyladenylate + adenosine(37) in tRNA = N(6)-L-threonylcarbamoyladenosine(37) in tRNA + AMP + H(+). Functionally, required for the formation of a threonylcarbamoyl group on adenosine at position 37 (t(6)A37) in tRNAs that read codons beginning with adenine. Is involved in the transfer of the threonylcarbamoyl moiety of threonylcarbamoyl-AMP (TC-AMP) to the N6 group of A37, together with TsaE and TsaB. TsaD likely plays a direct catalytic role in this reaction. In Cellvibrio japonicus (strain Ueda107) (Pseudomonas fluorescens subsp. cellulosa), this protein is tRNA N6-adenosine threonylcarbamoyltransferase.